The chain runs to 418 residues: Tyrosine--tRNA ligase (418 aa).

An L-tyrosine-binding site is contributed by Tyr-35. The short motif at 40-49 is the 'HIGH' region element; that stretch reads PTAKSLHIGH. The L-tyrosine site is built by Tyr-168 and Gln-172. The 'KMSKS' region signature appears at 228-232; it reads KYGKT. An ATP-binding site is contributed by Lys-231. One can recognise an S4 RNA-binding domain in the interval 352-410; the sequence is PTVVGAMVAAGVVDTKSGGRRAVAEGGAYLNNVKVADPDQRLTDDDFLCGRVALVRRGK.

This sequence belongs to the class-I aminoacyl-tRNA synthetase family. TyrS type 1 subfamily. Homodimer.

Its subcellular location is the cytoplasm. It catalyses the reaction tRNA(Tyr) + L-tyrosine + ATP = L-tyrosyl-tRNA(Tyr) + AMP + diphosphate + H(+). In terms of biological role, catalyzes the attachment of tyrosine to tRNA(Tyr) in a two-step reaction: tyrosine is first activated by ATP to form Tyr-AMP and then transferred to the acceptor end of tRNA(Tyr). This Cutibacterium acnes (strain DSM 16379 / KPA171202) (Propionibacterium acnes) protein is Tyrosine--tRNA ligase.